The following is a 311-amino-acid chain: Aspartate carbamoyltransferase catalytic subunit (311 aa).

Residues arginine 59 and threonine 60 each coordinate carbamoyl phosphate. Lysine 87 provides a ligand contact to L-aspartate. Carbamoyl phosphate-binding residues include arginine 109, histidine 139, and glutamine 142. Residues arginine 172 and arginine 224 each contribute to the L-aspartate site. The carbamoyl phosphate site is built by alanine 265 and proline 266.

This sequence belongs to the aspartate/ornithine carbamoyltransferase superfamily. ATCase family. In terms of assembly, heterododecamer (2C3:3R2) of six catalytic PyrB chains organized as two trimers (C3), and six regulatory PyrI chains organized as three dimers (R2).

The enzyme catalyses carbamoyl phosphate + L-aspartate = N-carbamoyl-L-aspartate + phosphate + H(+). The protein operates within pyrimidine metabolism; UMP biosynthesis via de novo pathway; (S)-dihydroorotate from bicarbonate: step 2/3. Catalyzes the condensation of carbamoyl phosphate and aspartate to form carbamoyl aspartate and inorganic phosphate, the committed step in the de novo pyrimidine nucleotide biosynthesis pathway. The protein is Aspartate carbamoyltransferase catalytic subunit of Streptococcus pyogenes serotype M4 (strain MGAS10750).